The chain runs to 62 residues: Photosystem II reaction center protein Z (62 aa).

2 helical membrane-spanning segments follow: residues 8–28 (AVFA…LVFA) and 41–61 (FSGT…NSLI).

The protein belongs to the PsbZ family. As to quaternary structure, PSII is composed of 1 copy each of membrane proteins PsbA, PsbB, PsbC, PsbD, PsbE, PsbF, PsbH, PsbI, PsbJ, PsbK, PsbL, PsbM, PsbT, PsbY, PsbZ, Psb30/Ycf12, at least 3 peripheral proteins of the oxygen-evolving complex and a large number of cofactors. It forms dimeric complexes.

The protein localises to the plastid. It is found in the chloroplast thylakoid membrane. Its function is as follows. May control the interaction of photosystem II (PSII) cores with the light-harvesting antenna, regulates electron flow through the 2 photosystem reaction centers. PSII is a light-driven water plastoquinone oxidoreductase, using light energy to abstract electrons from H(2)O, generating a proton gradient subsequently used for ATP formation. The chain is Photosystem II reaction center protein Z from Oryza nivara (Indian wild rice).